Here is a 147-residue protein sequence, read N- to C-terminus: Two-component response regulator ORR11 (147 aa).

One can recognise a Response regulatory domain in the interval 29–146 (HVLAVDDSSV…DVSRLFSRVL (118 aa)). D79 carries the 4-aspartylphosphate modification.

This sequence belongs to the ARR family. Type-A subfamily. Two-component system major event consists of a His-to-Asp phosphorelay between a sensor histidine kinase (HK) and a response regulator (RR). In plants, the His-to-Asp phosphorelay involves an additional intermediate named Histidine-containing phosphotransfer protein (HPt). This multistep phosphorelay consists of a His-Asp-His-Asp sequential transfer of a phosphate group between first a His and an Asp of the HK protein, followed by the transfer to a conserved His of the HPt protein and finally the transfer to an Asp in the receiver domain of the RR protein.

Its function is as follows. Functions as a response regulator involved in His-to-Asp phosphorelay signal transduction system. Phosphorylation of the Asp residue in the receiver domain activates the ability of the protein to promote the transcription of target genes. Type-A response regulators seem to act as negative regulators of the cytokinin signaling. The chain is Two-component response regulator ORR11 from Oryza sativa subsp. indica (Rice).